Reading from the N-terminus, the 430-residue chain is MSISVVILAAGQGTRMKSSTPKVLHTISGKPMLFHAIDAAKEISDDITVILHHQEERIQKEVEAEYENIIFHRQDAKNFPGTGGAMKGVYTRHERTLILNGDMPLIKKSSLEALTSGDADINMSIIRLEDPSGYGRVIIEDDKVVEIVEQKDCNEAQLCTQTVNAGIYAVDTALLERYIPLLRNDNAQKEYYLTDIVKMAVDEGRTVHPVYVEEEEFKGVNSKLDLARAEEIMQRRIKEALMMAGVTMCLPETIYIDCRATFEGECELENGVRIQGAAQLVNTHIKAHSVIEDSYLKNSDVGPMGRVRPGSKLVDTHIGNFVEVKKSDLNGVKAGHLSYIGDAQIGEGSNIGAGVITCNYDGKNKFRTIIGKNVFVGSDTQLVAPVCIEDDVIIAAGTTVNKDVEKGVLAISRTPMRTVKNFFYKFFGDK.

The tract at residues 1-223 (MSISVVILAA…EEEFKGVNSK (223 aa)) is pyrophosphorylase. Residues 8-11 (LAAG), K22, and 81-82 (GT) each bind UDP-N-acetyl-alpha-D-glucosamine. D102 lines the Mg(2+) pocket. The UDP-N-acetyl-alpha-D-glucosamine site is built by G135, E149, N164, and N221. Position 221 (N221) interacts with Mg(2+). Residues 224–244 (LDLARAEEIMQRRIKEALMMA) are linker. The tract at residues 245-430 (GVTMCLPETI…NFFYKFFGDK (186 aa)) is N-acetyltransferase. UDP-N-acetyl-alpha-D-glucosamine is bound by residues R308 and K325. The Proton acceptor role is filled by H336. Positions 339 and 350 each coordinate UDP-N-acetyl-alpha-D-glucosamine. Acetyl-CoA-binding positions include A353, 359 to 360 (NY), S378, A396, and R413.

In the N-terminal section; belongs to the N-acetylglucosamine-1-phosphate uridyltransferase family. It in the C-terminal section; belongs to the transferase hexapeptide repeat family. As to quaternary structure, homotrimer. The cofactor is Mg(2+).

The protein localises to the cytoplasm. The enzyme catalyses alpha-D-glucosamine 1-phosphate + acetyl-CoA = N-acetyl-alpha-D-glucosamine 1-phosphate + CoA + H(+). It carries out the reaction N-acetyl-alpha-D-glucosamine 1-phosphate + UTP + H(+) = UDP-N-acetyl-alpha-D-glucosamine + diphosphate. Its pathway is nucleotide-sugar biosynthesis; UDP-N-acetyl-alpha-D-glucosamine biosynthesis; N-acetyl-alpha-D-glucosamine 1-phosphate from alpha-D-glucosamine 6-phosphate (route II): step 2/2. It functions in the pathway nucleotide-sugar biosynthesis; UDP-N-acetyl-alpha-D-glucosamine biosynthesis; UDP-N-acetyl-alpha-D-glucosamine from N-acetyl-alpha-D-glucosamine 1-phosphate: step 1/1. It participates in bacterial outer membrane biogenesis; LPS lipid A biosynthesis. Its function is as follows. Catalyzes the last two sequential reactions in the de novo biosynthetic pathway for UDP-N-acetylglucosamine (UDP-GlcNAc). The C-terminal domain catalyzes the transfer of acetyl group from acetyl coenzyme A to glucosamine-1-phosphate (GlcN-1-P) to produce N-acetylglucosamine-1-phosphate (GlcNAc-1-P), which is converted into UDP-GlcNAc by the transfer of uridine 5-monophosphate (from uridine 5-triphosphate), a reaction catalyzed by the N-terminal domain. The sequence is that of Bifunctional protein GlmU from Sulfurovum sp. (strain NBC37-1).